The primary structure comprises 114 residues: Beta-microseminoprotein E1 (114 aa).

An N-terminal signal peptide occupies residues 1–20 (MNVLLGGLVIFATFVTLCNG). 5 cysteine pairs are disulfide-bonded: Cys22–Cys70, Cys38–Cys62, Cys57–Cys93, Cys60–Cys69, and Cys84–Cys107.

This sequence belongs to the beta-microseminoprotein family.

The protein resides in the secreted. This is Beta-microseminoprotein E1 (MSPE) from Saguinus oedipus (Cotton-top tamarin).